The sequence spans 125 residues: Ribosome maturation factor RimP (125 aa).

It belongs to the RimP family.

It localises to the cytoplasm. Functionally, required for maturation of 30S ribosomal subunits. The polypeptide is Ribosome maturation factor RimP (Rickettsia canadensis (strain McKiel)).